Reading from the N-terminus, the 1162-residue chain is Lysine-specific demethylase 2A (1162 aa).

At Ser28 the chain carries Phosphoserine. Residues 148–316 form the JmjC domain; that stretch reads FSHTRLENMV…MQLKIYNIED (169 aa). Thr209 is a substrate binding site. Residues His212 and Asp214 each contribute to the Fe cation site. Lys229 is a binding site for substrate. Fe cation is bound at residue His284. Positions 367–389 are disordered; it reads GLESGNGDEEAVDREPRRLSSRR. Phosphoserine is present on residues Ser390 and Ser394. Residue Lys505 forms a Glycyl lysine isopeptide (Lys-Gly) (interchain with G-Cter in SUMO2) linkage. The disordered stretch occupies residues 532–557; the sequence is VPTIPITKPHTMKPAPRLTPVRPAAA. Residue Thr550 is modified to Phosphothreonine. The residue at position 558 (Ser558) is a Phosphoserine. A CXXC-type zinc finger spans residues 564–610; sequence ARRRRVRCRKCKACVQGECGVCHYCRDMKKFGGPGRMKQSCVLRQCL. Zn(2+) contacts are provided by Cys571, Cys574, Cys577, Cys582, Cys585, Cys588, Cys604, Cys609, Cys620, and Cys623. The segment at 617–678 adopts a PHD-type zinc-finger fold; that stretch reads SVTCSLCGEV…CWECPKCYQE (62 aa). Thr632 carries the phosphothreonine modification. Positions 642, 645, 650, 653, 672, and 675 each coordinate Zn(2+). At Ser692 the chain carries Phosphoserine. The interval 704–789 is disordered; it reads PLRSCDEPLT…PSGKKELSEV (86 aa). Position 713 is a phosphothreonine (Thr713). Ser718 and Ser731 each carry phosphoserine. Basic and acidic residues-rich tracts occupy residues 746–757 and 771–789; these read SDHHSASRDERF and TMVR…LSEV. A phosphoserine mark is found at Ser825, Ser832, Ser869, and Ser883. Residues 839 to 887 are disordered; it reads HCPARTPQRGDEEGLGGEEEEEEEEEEEDDSAEEGGAARLNGRGSWAQD. A compositionally biased stretch (acidic residues) spans 851–871; the sequence is EGLGGEEEEEEEEEEEDDSAE. The 48-residue stretch at 889 to 936 folds into the F-box domain; the sequence is DESWMQREVWMSVFRYLSRRELCECMRVCKTWYKWCCDKRLWTKIDLS. LRR repeat units lie at residues 961–982 and 984–1010; these read WTNI…LKDL and LAGC…DLRW. The residue at position 1020 (Arg1020) is an ADP-ribosylarginine. LRR repeat units follow at residues 1048–1073, 1074–1103, 1104–1128, and 1129–1156; these read GLDI…DLSH, CSHL…NMAG, CNKL…DLRG, and CKQI…SDEK.

This sequence belongs to the JHDM1 histone demethylase family. In terms of assembly, interacts with CBX5/HP1A; the interaction promotes CBX5 localization to chromatin. The SKP1-KDM2A complex interacts with UBB. Part of a SCF (SKP1-cullin-F-box) protein ligase complex. The cofactor is Fe(2+). Post-translationally, mono-ADP-ribosylated at Arg-1020 in response to DNA damage, leading to displacement from chromatin, resulting in increased dimethylation of histone H3 at 'Lys-36'. Widely expressed, with highest levels in brain, testis and ovary, followed by lung.

It is found in the nucleus. It localises to the nucleoplasm. The protein resides in the chromosome. The enzyme catalyses N(6),N(6)-dimethyl-L-lysyl(36)-[histone H3] + 2 2-oxoglutarate + 2 O2 = L-lysyl(36)-[histone H3] + 2 formaldehyde + 2 succinate + 2 CO2. Its function is as follows. Histone demethylase that specifically demethylates 'Lys-36' of histone H3, thereby playing a central role in histone code. Preferentially demethylates dimethylated H3 'Lys-36' residue while it has weak or no activity for mono- and tri-methylated H3 'Lys-36'. May also recognize and bind to some phosphorylated proteins and promote their ubiquitination and degradation. Required to maintain the heterochromatic state. Associates with centromeres and represses transcription of small non-coding RNAs that are encoded by the clusters of satellite repeats at the centromere. Required to sustain centromeric integrity and genomic stability, particularly during mitosis. Regulates circadian gene expression by repressing the transcriptional activator activity of CLOCK-BMAL1 heterodimer and RORA in a catalytically-independent manner. The sequence is that of Lysine-specific demethylase 2A (KDM2A) from Homo sapiens (Human).